The following is a 263-amino-acid chain: GTP cyclohydrolase FolE2 (263 aa).

The protein belongs to the GTP cyclohydrolase IV family.

It carries out the reaction GTP + H2O = 7,8-dihydroneopterin 3'-triphosphate + formate + H(+). It participates in cofactor biosynthesis; 7,8-dihydroneopterin triphosphate biosynthesis; 7,8-dihydroneopterin triphosphate from GTP: step 1/1. Converts GTP to 7,8-dihydroneopterin triphosphate. The sequence is that of GTP cyclohydrolase FolE2 from Nitrosospira multiformis (strain ATCC 25196 / NCIMB 11849 / C 71).